The primary structure comprises 82 residues: Apovitellenin-1 (82 aa).

It belongs to the apovitellenin family. As to quaternary structure, monomer. In terms of tissue distribution, found in egg yolk and in plasma.

Functionally, protein component of the very low density lipoprotein (VLDL) of egg-laying females. Potent lipoprotein lipase inhibitor, preventing the loss of triglycerides from VLDL on their way from the liver to the growing oocytes. This Meleagris gallopavo (Wild turkey) protein is Apovitellenin-1.